Consider the following 172-residue polypeptide: Crossover junction endodeoxyribonuclease RuvC (172 aa).

Active-site residues include D7, E67, and D140. 3 residues coordinate Mg(2+): D7, E67, and D140.

Belongs to the RuvC family. As to quaternary structure, homodimer which binds Holliday junction (HJ) DNA. The HJ becomes 2-fold symmetrical on binding to RuvC with unstacked arms; it has a different conformation from HJ DNA in complex with RuvA. In the full resolvosome a probable DNA-RuvA(4)-RuvB(12)-RuvC(2) complex forms which resolves the HJ. The cofactor is Mg(2+).

The protein localises to the cytoplasm. It carries out the reaction Endonucleolytic cleavage at a junction such as a reciprocal single-stranded crossover between two homologous DNA duplexes (Holliday junction).. Functionally, the RuvA-RuvB-RuvC complex processes Holliday junction (HJ) DNA during genetic recombination and DNA repair. Endonuclease that resolves HJ intermediates. Cleaves cruciform DNA by making single-stranded nicks across the HJ at symmetrical positions within the homologous arms, yielding a 5'-phosphate and a 3'-hydroxyl group; requires a central core of homology in the junction. The consensus cleavage sequence is 5'-(A/T)TT(C/G)-3'. Cleavage occurs on the 3'-side of the TT dinucleotide at the point of strand exchange. HJ branch migration catalyzed by RuvA-RuvB allows RuvC to scan DNA until it finds its consensus sequence, where it cleaves and resolves the cruciform DNA. This Syntrophomonas wolfei subsp. wolfei (strain DSM 2245B / Goettingen) protein is Crossover junction endodeoxyribonuclease RuvC.